The following is a 32-amino-acid chain: Protamine-3A (32 aa).

The disordered stretch occupies residues 1-32 (PRRRRRSSSRPIRRRRRPRVSRRRRRGGRRRR).

In terms of tissue distribution, testis.

The protein localises to the nucleus. It localises to the chromosome. In terms of biological role, protamines substitute for histones in the chromatin of sperm during the haploid phase of spermatogenesis. They compact sperm DNA into a highly condensed, stable and inactive complex. The sequence is that of Protamine-3A from Oncorhynchus mykiss (Rainbow trout).